The primary structure comprises 165 residues: Ribosome maturation factor RimM (165 aa).

Positions 90–161 (EDEYFIVDLV…LITIRPSGEW (72 aa)) constitute a PRC barrel domain.

This sequence belongs to the RimM family. In terms of assembly, binds ribosomal protein uS19.

The protein resides in the cytoplasm. Functionally, an accessory protein needed during the final step in the assembly of 30S ribosomal subunit, possibly for assembly of the head region. Essential for efficient processing of 16S rRNA. May be needed both before and after RbfA during the maturation of 16S rRNA. It has affinity for free ribosomal 30S subunits but not for 70S ribosomes. The polypeptide is Ribosome maturation factor RimM (Clostridium perfringens (strain ATCC 13124 / DSM 756 / JCM 1290 / NCIMB 6125 / NCTC 8237 / Type A)).